The chain runs to 262 residues: 2-keto-4-pentenoate hydratase 2 (262 aa).

This sequence belongs to the hydratase/decarboxylase family. MhpD subfamily. It depends on a divalent metal cation as a cofactor.

It catalyses the reaction (S)-4-hydroxy-2-oxopentanoate = (2Z)-2-hydroxypenta-2,4-dienoate + H2O. It participates in aromatic compound metabolism; 3-phenylpropanoate degradation. In terms of biological role, catalyzes the conversion of 2-hydroxypentadienoic acid (enolic form of 2-oxopent-4-enoate) to 4-hydroxy-2-ketopentanoic acid. The polypeptide is 2-keto-4-pentenoate hydratase 2 (Dechloromonas aromatica (strain RCB)).